Consider the following 308-residue polypeptide: Malate dehydrogenase (308 aa).

6 to 11 contributes to the NADP(+) binding site; sequence GAGKVG. Substrate contacts are provided by Arg-79 and Arg-85. NADP(+) contacts are provided by residues Asn-92 and 115–117; that span reads TTN. The substrate site is built by Asn-117 and Arg-148. His-172 serves as the catalytic Proton acceptor.

The protein belongs to the LDH/MDH superfamily. As to quaternary structure, homotetramer.

It catalyses the reaction (S)-malate + NADP(+) = oxaloacetate + NADPH + H(+). It carries out the reaction (S)-malate + NAD(+) = oxaloacetate + NADH + H(+). Functionally, catalyzes the reversible oxidation of malate to oxaloacetate. Can also oxidize tartrate. Can utilize both NAD and NADP. Catalytic efficiency for malate oxidation is 3-fold higher with NADP. The chain is Malate dehydrogenase (mdh) from Aeropyrum pernix (strain ATCC 700893 / DSM 11879 / JCM 9820 / NBRC 100138 / K1).